A 697-amino-acid polypeptide reads, in one-letter code: DNA ligase (697 aa).

NAD(+) contacts are provided by residues 34 to 38, 83 to 84, and E114; these read DKTYD and SL. Catalysis depends on K116, which acts as the N6-AMP-lysine intermediate. NAD(+) is bound by residues R137, E171, K315, and K339. Zn(2+) is bound by residues C430, C433, C448, and C453. In terms of domain architecture, BRCT spans 616 to 697; sequence KKSSKLNNLN…FHNLLKEENA (82 aa).

The protein belongs to the NAD-dependent DNA ligase family. LigA subfamily. Requires Mg(2+) as cofactor. Mn(2+) serves as cofactor.

The enzyme catalyses NAD(+) + (deoxyribonucleotide)n-3'-hydroxyl + 5'-phospho-(deoxyribonucleotide)m = (deoxyribonucleotide)n+m + AMP + beta-nicotinamide D-nucleotide.. In terms of biological role, DNA ligase that catalyzes the formation of phosphodiester linkages between 5'-phosphoryl and 3'-hydroxyl groups in double-stranded DNA using NAD as a coenzyme and as the energy source for the reaction. It is essential for DNA replication and repair of damaged DNA. This Mycoplasmopsis synoviae (strain 53) (Mycoplasma synoviae) protein is DNA ligase.